Reading from the N-terminus, the 626-residue chain is Ankyrin repeat domain-containing protein 13B (626 aa).

Met1 bears the N-acetylmethionine mark. 2 ANK repeats span residues 47 to 76 (RGRT…DVGR) and 80 to 109 (SGWT…YQRV). A disordered region spans residues 442-470 (PVPSVRGSPGSETPSPGSDSSSVSSSSST). A compositionally biased stretch (low complexity) spans 448–470 (GSPGSETPSPGSDSSSVSSSSST). In terms of domain architecture, UIM 1 spans 503–522 (EDDDLLRFAIQQSLLEAGSE). The interval 534–614 (NSKPGTHPMS…RRRVRQEEEE (81 aa)) is disordered. Pro residues predominate over residues 554–575 (PPTPQRQPMPPAPVPSPRPSPG). 2 UIM domains span residues 585–604 (SYDE…QEER) and 610–626 (QEEE…LTEQ).

Interacts with EGFR (ubiquitinated); the interaction is direct and may regulate EGFR internalization.

Its subcellular location is the cell membrane. The protein localises to the late endosome. It is found in the early endosome. Its function is as follows. Ubiquitin-binding protein that specifically recognizes and binds 'Lys-63'-linked ubiquitin. Does not bind 'Lys-48'-linked ubiquitin. Positively regulates the internalization of ligand-activated EGFR by binding to the Ub moiety of ubiquitinated EGFR at the cell membrane. This is Ankyrin repeat domain-containing protein 13B (Ankrd13b) from Mus musculus (Mouse).